The following is a 147-amino-acid chain: Large ribosomal subunit protein uL13 (147 aa).

The protein belongs to the universal ribosomal protein uL13 family. In terms of assembly, part of the 50S ribosomal subunit.

Its function is as follows. This protein is one of the early assembly proteins of the 50S ribosomal subunit, although it is not seen to bind rRNA by itself. It is important during the early stages of 50S assembly. The protein is Large ribosomal subunit protein uL13 of Mycobacterium leprae (strain Br4923).